The primary structure comprises 68 residues: MLVLTRTNGQAIKIGNEGEITVTVLEVRGNQVRMGIDAPKHIAVHREEIYQRIQEEKPKAPPILEEVE.

This sequence belongs to the CsrA/RsmA family. Homodimer; the beta-strands of each monomer intercalate to form a hydrophobic core, while the alpha-helices form wings that extend away from the core.

The protein localises to the cytoplasm. In terms of biological role, a key translational regulator that binds mRNA to regulate translation initiation and/or mRNA stability. Mediates global changes in gene expression, shifting from rapid growth to stress survival by linking envelope stress, the stringent response and the catabolite repression systems. Usually binds in the 5'-UTR; binding at or near the Shine-Dalgarno sequence prevents ribosome-binding, repressing translation, binding elsewhere in the 5'-UTR can activate translation and/or stabilize the mRNA. Its function is antagonized by small RNA(s). This Coxiella burnetii (strain RSA 493 / Nine Mile phase I) protein is Translational regulator CsrA 1.